The primary structure comprises 461 residues: Cysteine--tRNA ligase (461 aa).

Zn(2+) is bound at residue Cys-28. The short motif at 30 to 40 (ITVYDLCHIGH) is the 'HIGH' region element. The Zn(2+) site is built by Cys-209, His-234, and Glu-238. The short motif at 266–270 (KMSKS) is the 'KMSKS' region element. Lys-269 serves as a coordination point for ATP.

Belongs to the class-I aminoacyl-tRNA synthetase family. Monomer. Requires Zn(2+) as cofactor.

Its subcellular location is the cytoplasm. The enzyme catalyses tRNA(Cys) + L-cysteine + ATP = L-cysteinyl-tRNA(Cys) + AMP + diphosphate. In Escherichia fergusonii (strain ATCC 35469 / DSM 13698 / CCUG 18766 / IAM 14443 / JCM 21226 / LMG 7866 / NBRC 102419 / NCTC 12128 / CDC 0568-73), this protein is Cysteine--tRNA ligase.